The primary structure comprises 210 residues: LexA repressor (210 aa).

The H-T-H motif DNA-binding region spans 31–51; that stretch reads RVEISKELGFRSPNAAEEHLK. Residues Ser126 and Lys163 each act as for autocatalytic cleavage activity in the active site.

Belongs to the peptidase S24 family. Homodimer.

The enzyme catalyses Hydrolysis of Ala-|-Gly bond in repressor LexA.. Functionally, represses a number of genes involved in the response to DNA damage (SOS response), including recA and lexA. In the presence of single-stranded DNA, RecA interacts with LexA causing an autocatalytic cleavage which disrupts the DNA-binding part of LexA, leading to derepression of the SOS regulon and eventually DNA repair. This chain is LexA repressor, found in Histophilus somni (strain 129Pt) (Haemophilus somnus).